A 155-amino-acid polypeptide reads, in one-letter code: S-ribosylhomocysteine lyase (155 aa).

Fe cation contacts are provided by His-54, His-58, and Cys-122.

It belongs to the LuxS family. In terms of assembly, homodimer. It depends on Fe cation as a cofactor.

It catalyses the reaction S-(5-deoxy-D-ribos-5-yl)-L-homocysteine = (S)-4,5-dihydroxypentane-2,3-dione + L-homocysteine. Functionally, involved in the synthesis of autoinducer 2 (AI-2) which is secreted by bacteria and is used to communicate both the cell density and the metabolic potential of the environment. The regulation of gene expression in response to changes in cell density is called quorum sensing. Catalyzes the transformation of S-ribosylhomocysteine (RHC) to homocysteine (HC) and 4,5-dihydroxy-2,3-pentadione (DPD). The sequence is that of S-ribosylhomocysteine lyase from Deinococcus geothermalis (strain DSM 11300 / CIP 105573 / AG-3a).